The primary structure comprises 420 residues: MSQGVTAPFARHAMAYVLAGGRGSRLMELTDWRAKPAVYFGGKSRIIDFALSNALNSGIRRIAVATQYKAHSLIRHLQRGWNFFRPERNESFDILPASQRVSEEMWYRGTADAVFQNIDIIESYDPKFIVLLAGDHVYKMDYEKMLQQHVEQGADVTVGCLEVPRAEATAFGVMHTDTTDRIISFLEKPADPPAMPGKADKSLVSMGIYVFETKFLLDELRRDAADPNSSHDFGKDIIPYIVKHGKAVAHHFDKSCRRSSSEAVSYWRDVGTVDAYWAANIDLTDIVPELDLYDREWPIWTYGEITPPAKFVHDKEGRRGEAVSSLVSGGCIISGASLRHSLLFTGVRVHSFSHVENTVVLPYADIGRSCRLKNVVIDAEVKLPAGLVVGEDPELDAKRFRRTENGICLITRAMIEKLDA.

Alpha-D-glucose 1-phosphate-binding positions include tyrosine 107, glycine 172, 187–188 (EK), and serine 205.

Belongs to the bacterial/plant glucose-1-phosphate adenylyltransferase family. Homotetramer.

The enzyme catalyses alpha-D-glucose 1-phosphate + ATP + H(+) = ADP-alpha-D-glucose + diphosphate. Its pathway is glycan biosynthesis; glycogen biosynthesis. Its function is as follows. Involved in the biosynthesis of ADP-glucose, a building block required for the elongation reactions to produce glycogen. Catalyzes the reaction between ATP and alpha-D-glucose 1-phosphate (G1P) to produce pyrophosphate and ADP-Glc. This is Glucose-1-phosphate adenylyltransferase from Rhodopseudomonas palustris (strain TIE-1).